We begin with the raw amino-acid sequence, 171 residues long: Ribosome maturation factor RimM (171 aa).

The region spanning 98-170 is the PRC barrel domain; it reads EGEFYLHQII…AVQVSVPEGL (73 aa).

Belongs to the RimM family. Binds ribosomal protein uS19.

It localises to the cytoplasm. An accessory protein needed during the final step in the assembly of 30S ribosomal subunit, possibly for assembly of the head region. Essential for efficient processing of 16S rRNA. May be needed both before and after RbfA during the maturation of 16S rRNA. It has affinity for free ribosomal 30S subunits but not for 70S ribosomes. The polypeptide is Ribosome maturation factor RimM (Pediococcus pentosaceus (strain ATCC 25745 / CCUG 21536 / LMG 10740 / 183-1w)).